A 327-amino-acid polypeptide reads, in one-letter code: Serpentine receptor class gamma-2 (327 aa).

6 consecutive transmembrane segments (helical) span residues 35 to 55 (LVQF…LYIL), 70 to 90 (ILFI…IFFA), 157 to 177 (MKYA…NIII), 181 to 203 (LPVY…ATMT), 244 to 264 (IASF…SLFA), and 277 to 297 (FLLP…MVMA).

The protein belongs to the nematode receptor-like protein srg family.

The protein localises to the membrane. This Caenorhabditis elegans protein is Serpentine receptor class gamma-2 (srg-2).